A 695-amino-acid polypeptide reads, in one-letter code: NADPH--cytochrome P450 reductase (695 aa).

Topologically, residues methionine 1–aspartate 8 are lumenal. A helical membrane pass occupies residues leucine 9 to valine 31. Residues alanine 32–serine 695 are Cytoplasmic-facing. The Flavodoxin-like domain occupies cysteine 66 to tryptophan 221. FMN contacts are provided by residues serine 72 to alanine 77, alanine 123 to glycine 126, leucine 169 to asparagine 178, and aspartate 204. An FAD-binding FR-type domain is found at histidine 277–proline 538. Arginine 296 contacts NADP(+). Residues arginine 451–serine 454, threonine 469–valine 471, and glycine 486–threonine 489 contribute to the FAD site. NADP(+) contacts are provided by residues threonine 552, serine 614 to arginine 615, lysine 620 to glutamine 624, and glutamate 656. An FAD-binding site is contributed by tryptophan 694.

This sequence belongs to the NADPH--cytochrome P450 reductase family. In the N-terminal section; belongs to the flavodoxin family. The protein in the C-terminal section; belongs to the flavoprotein pyridine nucleotide cytochrome reductase family. FAD is required as a cofactor. FMN serves as cofactor.

The protein resides in the endoplasmic reticulum membrane. It is found in the mitochondrion outer membrane. It localises to the cell membrane. It catalyses the reaction 2 oxidized [cytochrome P450] + NADPH = 2 reduced [cytochrome P450] + NADP(+) + H(+). This enzyme is required for electron transfer from NADP to cytochrome P450 in microsomes. It can also provide electron transfer to heme oxygenase and cytochrome B5. Involved in ergosterol biosynthesis. The chain is NADPH--cytochrome P450 reductase from Aspergillus niger (strain ATCC MYA-4892 / CBS 513.88 / FGSC A1513).